The chain runs to 228 residues: N-acylneuraminate cytidylyltransferase (228 aa).

Belongs to the CMP-NeuNAc synthase family.

Its subcellular location is the cytoplasm. The catalysed reaction is an N-acylneuraminate + CTP = a CMP-N-acyl-beta-neuraminate + diphosphate. In Neisseria meningitidis serogroup B (strain ATCC BAA-335 / MC58), this protein is N-acylneuraminate cytidylyltransferase (neuA).